The following is a 424-amino-acid chain: F-box protein At2g38590 (424 aa).

The F-box domain maps to 2-47 (TTMISNLPRVLIEEIFFRVPLKSLRAVRLTCKSWNTLSKSRSFRKL).

This Arabidopsis thaliana (Mouse-ear cress) protein is F-box protein At2g38590.